A 244-amino-acid polypeptide reads, in one-letter code: Small ribosomal subunit protein uS3 (244 aa).

Positions 38 to 106 constitute a KH type-2 domain; it reads IRKYLNARLA…DIQINIFEVK (69 aa). The segment at 217 to 244 is disordered; sequence TQSKESGRGNNGGNNGGGKNFKRKKNNR. The span at 225–235 shows a compositional bias: gly residues; that stretch reads GNNGGNNGGGK.

The protein belongs to the universal ribosomal protein uS3 family. Part of the 30S ribosomal subunit. Forms a tight complex with proteins S10 and S14.

Its function is as follows. Binds the lower part of the 30S subunit head. Binds mRNA in the 70S ribosome, positioning it for translation. In Bacteroides fragilis (strain ATCC 25285 / DSM 2151 / CCUG 4856 / JCM 11019 / LMG 10263 / NCTC 9343 / Onslow / VPI 2553 / EN-2), this protein is Small ribosomal subunit protein uS3.